Reading from the N-terminus, the 109-residue chain is Cell division protein ZapA (109 aa).

The stretch at 21–97 (PEQQEALNQA…QTIEQALVEQ (77 aa)) forms a coiled coil.

It belongs to the ZapA family. Type 1 subfamily. In terms of assembly, homodimer. Interacts with FtsZ.

The protein localises to the cytoplasm. Activator of cell division through the inhibition of FtsZ GTPase activity, therefore promoting FtsZ assembly into bundles of protofilaments necessary for the formation of the division Z ring. It is recruited early at mid-cell but it is not essential for cell division. This chain is Cell division protein ZapA, found in Sodalis glossinidius (strain morsitans).